Here is a 450-residue protein sequence, read N- to C-terminus: Na(+)/H(+) antiporter NhaA 2 (450 aa).

12 helical membrane-spanning segments follow: residues 43–63 (VGGAVLLVASAVALVWANSPW), 86–106 (LTLGTWAADGLLAVFFLVVGL), 124–144 (ALPMAAAVGGMVVPALIFVAV), 155–175 (GWAIPTATDIAFAVAVLAVIS), 185–205 (FLLTLAVVDDLLAVTVIAVFY), 208–228 (EINLTALGLSIVPLALFALCV), 234–254 (SWWLLLPLGVATWVLVHESGV), 258–278 (VAGVLLGFTVPVLRSVAAGGP), 299–319 (VAVPVFAFFAAGVAIGGVSGL), 326–346 (PITLGIILGLVVGKPVGIFLT), 364–384 (WIDVFGVALLAGIGFTVSLLI), and 398–418 (FVKVGVLTGSLVAALIAAVLL).

This sequence belongs to the NhaA Na(+)/H(+) (TC 2.A.33) antiporter family.

The protein localises to the cell membrane. The catalysed reaction is Na(+)(in) + 2 H(+)(out) = Na(+)(out) + 2 H(+)(in). Na(+)/H(+) antiporter that extrudes sodium in exchange for external protons. This chain is Na(+)/H(+) antiporter NhaA 2, found in Mycobacterium sp. (strain JLS).